A 357-amino-acid chain; its full sequence is UDP-N-acetylglucosamine--N-acetylmuramyl-(pentapeptide) pyrophosphoryl-undecaprenol N-acetylglucosamine transferase (357 aa).

UDP-N-acetyl-alpha-D-glucosamine contacts are provided by residues 15–17 (TGG), asparagine 123, arginine 164, serine 190, and glutamine 284.

The protein belongs to the glycosyltransferase 28 family. MurG subfamily.

The protein resides in the cell inner membrane. It carries out the reaction di-trans,octa-cis-undecaprenyl diphospho-N-acetyl-alpha-D-muramoyl-L-alanyl-D-glutamyl-meso-2,6-diaminopimeloyl-D-alanyl-D-alanine + UDP-N-acetyl-alpha-D-glucosamine = di-trans,octa-cis-undecaprenyl diphospho-[N-acetyl-alpha-D-glucosaminyl-(1-&gt;4)]-N-acetyl-alpha-D-muramoyl-L-alanyl-D-glutamyl-meso-2,6-diaminopimeloyl-D-alanyl-D-alanine + UDP + H(+). The protein operates within cell wall biogenesis; peptidoglycan biosynthesis. Cell wall formation. Catalyzes the transfer of a GlcNAc subunit on undecaprenyl-pyrophosphoryl-MurNAc-pentapeptide (lipid intermediate I) to form undecaprenyl-pyrophosphoryl-MurNAc-(pentapeptide)GlcNAc (lipid intermediate II). The protein is UDP-N-acetylglucosamine--N-acetylmuramyl-(pentapeptide) pyrophosphoryl-undecaprenol N-acetylglucosamine transferase of Synechococcus elongatus (strain ATCC 33912 / PCC 7942 / FACHB-805) (Anacystis nidulans R2).